A 141-amino-acid chain; its full sequence is MAKKVVALIKLALPAGKANPAPPVGPALGQHGVNIMAFCKEYNAKTSDQAGMVIPVEISVFEDRSFTFVLKTPPASVLIRKAAGIEKGSAQPNNQKVGSISRDQLKEIAQTKMPDLNANDIDAAMNIVEGTARNMGVTIND.

This sequence belongs to the universal ribosomal protein uL11 family. In terms of assembly, part of the ribosomal stalk of the 50S ribosomal subunit. Interacts with L10 and the large rRNA to form the base of the stalk. L10 forms an elongated spine to which L12 dimers bind in a sequential fashion forming a multimeric L10(L12)X complex. In terms of processing, one or more lysine residues are methylated.

Its function is as follows. Forms part of the ribosomal stalk which helps the ribosome interact with GTP-bound translation factors. This is Large ribosomal subunit protein uL11 from Crocosphaera subtropica (strain ATCC 51142 / BH68) (Cyanothece sp. (strain ATCC 51142)).